We begin with the raw amino-acid sequence, 660 residues long: DNA mismatch repair protein MutL (660 aa).

The protein belongs to the DNA mismatch repair MutL/HexB family.

Its function is as follows. This protein is involved in the repair of mismatches in DNA. It is required for dam-dependent methyl-directed DNA mismatch repair. May act as a 'molecular matchmaker', a protein that promotes the formation of a stable complex between two or more DNA-binding proteins in an ATP-dependent manner without itself being part of a final effector complex. The sequence is that of DNA mismatch repair protein MutL from Streptococcus pyogenes serotype M12 (strain MGAS2096).